An 885-amino-acid polypeptide reads, in one-letter code: Alanine--tRNA ligase (885 aa).

H572, H576, C675, and H679 together coordinate Zn(2+).

Belongs to the class-II aminoacyl-tRNA synthetase family. The cofactor is Zn(2+).

It is found in the cytoplasm. It catalyses the reaction tRNA(Ala) + L-alanine + ATP = L-alanyl-tRNA(Ala) + AMP + diphosphate. In terms of biological role, catalyzes the attachment of alanine to tRNA(Ala) in a two-step reaction: alanine is first activated by ATP to form Ala-AMP and then transferred to the acceptor end of tRNA(Ala). Also edits incorrectly charged Ser-tRNA(Ala) and Gly-tRNA(Ala) via its editing domain. This Leifsonia xyli subsp. xyli (strain CTCB07) protein is Alanine--tRNA ligase.